Reading from the N-terminus, the 153-residue chain is Flagellar assembly factor FliW (153 aa).

The protein belongs to the FliW family. As to quaternary structure, interacts with translational regulator CsrA and flagellin(s).

The protein localises to the cytoplasm. Acts as an anti-CsrA protein, binds CsrA and prevents it from repressing translation of its target genes, one of which is flagellin. Binds to flagellin and participates in the assembly of the flagellum. In Leptospira biflexa serovar Patoc (strain Patoc 1 / Ames), this protein is Flagellar assembly factor FliW.